The sequence spans 335 residues: Biotin synthase (335 aa).

The tract at residues 1 to 20 (MVSVGTQSHSGRDQAEQNPS) is disordered. One can recognise a Radical SAM core domain in the interval 59–284 (GHLQKSSLLS…MMPQSMVRLS (226 aa)). C74, C78, and C81 together coordinate [4Fe-4S] cluster. Residues C118, C150, C210, and R282 each coordinate [2Fe-2S] cluster.

It belongs to the radical SAM superfamily. Biotin synthase family. Homodimer. [4Fe-4S] cluster is required as a cofactor. [2Fe-2S] cluster serves as cofactor.

The catalysed reaction is (4R,5S)-dethiobiotin + (sulfur carrier)-SH + 2 reduced [2Fe-2S]-[ferredoxin] + 2 S-adenosyl-L-methionine = (sulfur carrier)-H + biotin + 2 5'-deoxyadenosine + 2 L-methionine + 2 oxidized [2Fe-2S]-[ferredoxin]. It participates in cofactor biosynthesis; biotin biosynthesis; biotin from 7,8-diaminononanoate: step 2/2. Functionally, catalyzes the conversion of dethiobiotin (DTB) to biotin by the insertion of a sulfur atom into dethiobiotin via a radical-based mechanism. This chain is Biotin synthase, found in Zymomonas mobilis subsp. mobilis (strain ATCC 31821 / ZM4 / CP4).